A 190-amino-acid polypeptide reads, in one-letter code: Pyridoxal 5'-phosphate synthase subunit PdxT (190 aa).

An L-glutamine-binding site is contributed by 46 to 48; that stretch reads GES. Residue cysteine 78 is the Nucleophile of the active site. L-glutamine contacts are provided by residues arginine 108 and 137–138; that span reads IR. Catalysis depends on charge relay system residues histidine 174 and glutamate 176.

It belongs to the glutaminase PdxT/SNO family. In terms of assembly, in the presence of PdxS, forms a dodecamer of heterodimers. Only shows activity in the heterodimer.

The enzyme catalyses aldehydo-D-ribose 5-phosphate + D-glyceraldehyde 3-phosphate + L-glutamine = pyridoxal 5'-phosphate + L-glutamate + phosphate + 3 H2O + H(+). The catalysed reaction is L-glutamine + H2O = L-glutamate + NH4(+). It functions in the pathway cofactor biosynthesis; pyridoxal 5'-phosphate biosynthesis. Catalyzes the hydrolysis of glutamine to glutamate and ammonia as part of the biosynthesis of pyridoxal 5'-phosphate. The resulting ammonia molecule is channeled to the active site of PdxS. The chain is Pyridoxal 5'-phosphate synthase subunit PdxT from Chloroflexus aggregans (strain MD-66 / DSM 9485).